A 136-amino-acid chain; its full sequence is Translation initiation factor 5A (136 aa).

A Hypusine modification is found at lysine 36.

Belongs to the eIF-5A family.

Its subcellular location is the cytoplasm. Functions by promoting the formation of the first peptide bond. This chain is Translation initiation factor 5A (eIF5A), found in Hyperthermus butylicus (strain DSM 5456 / JCM 9403 / PLM1-5).